The following is a 140-amino-acid chain: Holo-[acyl-carrier-protein] synthase (140 aa).

Aspartate 8 and glutamate 62 together coordinate Mg(2+).

It belongs to the P-Pant transferase superfamily. AcpS family. Mg(2+) is required as a cofactor.

It is found in the cytoplasm. It carries out the reaction apo-[ACP] + CoA = holo-[ACP] + adenosine 3',5'-bisphosphate + H(+). Transfers the 4'-phosphopantetheine moiety from coenzyme A to a Ser of acyl-carrier-protein. This Cupriavidus necator (strain ATCC 17699 / DSM 428 / KCTC 22496 / NCIMB 10442 / H16 / Stanier 337) (Ralstonia eutropha) protein is Holo-[acyl-carrier-protein] synthase.